Reading from the N-terminus, the 360-residue chain is MKILAVDTKRGLVRVVPETTDDIWLLSTVIQPGDLVRAKTLREIHFGDRGSGRSSRIPMVLTVRVEAVEFQAFTTRLRIRGIVIEGPEKYGVVGKYHTLSIEPGRELDIVKPSGWPQVLIEKLKRGSYNVAAVVVAVDYDDYAVAVVRGQGVKILASGGLHLPGKDDPTREDKLREAVTVIAKTTADVARRENALLVVAAGPGTVKNLVAEKLRGLVQGVKILVDNVSMGGEAGVFEEVRRGIMRQALQDAAVVEAERILEEFERRLAKEPGRIAYTLEQVYRAAEMGAVEELLILDETLHHPDPEVRARVDELLRLADATRAKIHFVSVESPVGYKVKALGGVIALLRYAINFAGETGG.

It belongs to the eukaryotic release factor 1 family. Pelota subfamily. As to quaternary structure, monomer. A divalent metal cation is required as a cofactor.

The protein localises to the cytoplasm. Functionally, may function in recognizing stalled ribosomes, interact with stem-loop structures in stalled mRNA molecules, and effect endonucleolytic cleavage of the mRNA. May play a role in the release non-functional ribosomes and degradation of damaged mRNAs. Has endoribonuclease activity. This is Protein pelota homolog from Hyperthermus butylicus (strain DSM 5456 / JCM 9403 / PLM1-5).